We begin with the raw amino-acid sequence, 70 residues long: DNA-directed RNA polymerase subunit omega (70 aa).

It belongs to the RNA polymerase subunit omega family. The RNAP catalytic core consists of 2 alpha, 1 beta, 1 beta' and 1 omega subunit. When a sigma factor is associated with the core the holoenzyme is formed, which can initiate transcription.

It catalyses the reaction RNA(n) + a ribonucleoside 5'-triphosphate = RNA(n+1) + diphosphate. Functionally, promotes RNA polymerase assembly. Latches the N- and C-terminal regions of the beta' subunit thereby facilitating its interaction with the beta and alpha subunits. The protein is DNA-directed RNA polymerase subunit omega of Methylobacillus flagellatus (strain ATCC 51484 / DSM 6875 / VKM B-1610 / KT).